The following is a 138-amino-acid chain: MRTLWILAVLLLGVEGNLVQFELLIMKVAKRSGLLSYSAYGCYCGWGGHGRPQDATDRCCFVHDCCYGKVTDCNPKTASYTYSEENGEIVCGGDDPCKKQVCECDRVAAICFRDNIPSYDNKYIQFPAKNCQEKPEPC.

The first 16 residues, 1-16 (MRTLWILAVLLLGVEG), serve as a signal peptide directing secretion. 7 disulfides stabilise this stretch: cysteine 42-cysteine 131, cysteine 44-cysteine 60, cysteine 59-cysteine 111, cysteine 65-cysteine 138, cysteine 66-cysteine 104, cysteine 73-cysteine 97, and cysteine 91-cysteine 102. Positions 43, 45, and 47 each coordinate Ca(2+). Histidine 63 is an active-site residue. Aspartate 64 lines the Ca(2+) pocket. Aspartate 105 is a catalytic residue.

Requires Ca(2+) as cofactor. Expressed by the venom gland.

It is found in the secreted. It carries out the reaction a 1,2-diacyl-sn-glycero-3-phosphocholine + H2O = a 1-acyl-sn-glycero-3-phosphocholine + a fatty acid + H(+). Its function is as follows. Snake venom phospholipase A2 (PLA2) that significantly inhibits ADP-induced platelet aggregation in platelet-rich plasma of human, rabbit and guinea pig. PLA2 catalyzes the calcium-dependent hydrolysis of the 2-acyl groups in 3-sn-phosphoglycerides. This chain is Acidic phospholipase A2 Cvv-E6e, found in Crotalus viridis viridis (Prairie rattlesnake).